The chain runs to 341 residues: MKALSKLKAEKGIWLVDAPKPVMGHNDLLIKIKKTAICGTDMHIYNWDEWSQKTIPVPMVVGHEYVGEVVDIGQEVRGFNIGDRVSGEGHITCGHCRNCRAGRTHLCRNTSGVGVNREGSFAEYLVIPAFNAFKIPDDISDDLASIFDPFGNAVHTALSFDLVGEDVLITGAGPIGIMAAAVCRHVGARHVVITDVNEYRLELARKMGATRAVNVSKESLKDVMKELGMTEGFDVGLEMSGVPSAFHAMLDTMNHGGKIAMLGIPGGEMAIDWSKVIFKGLVIKGIYGREMFETWYKMASLIQSGLDISPIITHHFKIDDFQQGFDAMGSGQSGKVILSWD.

Cys38 provides a ligand contact to Zn(2+). Residues Thr40 and His43 each act as charge relay system in the active site. Residues His63, Glu64, Cys93, Cys96, Cys99, and Cys107 each contribute to the Zn(2+) site. NAD(+)-binding positions include Ile175, Asp195, Arg200, 262–264 (LGI), and 286–287 (IY).

This sequence belongs to the zinc-containing alcohol dehydrogenase family. Homotetramer. The cofactor is Zn(2+).

It is found in the cytoplasm. The enzyme catalyses L-threonine + NAD(+) = (2S)-2-amino-3-oxobutanoate + NADH + H(+). It functions in the pathway amino-acid degradation; L-threonine degradation via oxydo-reductase pathway; glycine from L-threonine: step 1/2. Functionally, catalyzes the NAD(+)-dependent oxidation of L-threonine to 2-amino-3-ketobutyrate. The chain is L-threonine 3-dehydrogenase from Shewanella sp. (strain W3-18-1).